A 203-amino-acid polypeptide reads, in one-letter code: Ribosome maturation factor RimP (203 aa).

Residues 179 to 203 (VSSEGEDGGEARQAPKLNPKKPGKK) form a disordered region.

This sequence belongs to the RimP family.

The protein resides in the cytoplasm. In terms of biological role, required for maturation of 30S ribosomal subunits. This Gluconobacter oxydans (strain 621H) (Gluconobacter suboxydans) protein is Ribosome maturation factor RimP.